The following is a 285-amino-acid chain: Bifunctional protein FolD (285 aa).

Residues 165-167 (GRS), S190, and I231 each bind NADP(+).

It belongs to the tetrahydrofolate dehydrogenase/cyclohydrolase family. In terms of assembly, homodimer.

The catalysed reaction is (6R)-5,10-methylene-5,6,7,8-tetrahydrofolate + NADP(+) = (6R)-5,10-methenyltetrahydrofolate + NADPH. The enzyme catalyses (6R)-5,10-methenyltetrahydrofolate + H2O = (6R)-10-formyltetrahydrofolate + H(+). The protein operates within one-carbon metabolism; tetrahydrofolate interconversion. In terms of biological role, catalyzes the oxidation of 5,10-methylenetetrahydrofolate to 5,10-methenyltetrahydrofolate and then the hydrolysis of 5,10-methenyltetrahydrofolate to 10-formyltetrahydrofolate. In Magnetococcus marinus (strain ATCC BAA-1437 / JCM 17883 / MC-1), this protein is Bifunctional protein FolD.